Reading from the N-terminus, the 171-residue chain is Lipoprotein signal peptidase (171 aa).

Helical transmembrane passes span 8–28 (SFLW…YIVV), 64–84 (WQQY…VYFL), and 99–119 (ALII…GFVV). Residues Asp-120 and Asp-138 contribute to the active site. Residues 133-153 (VFNIADIAICIGAGLLALDAF) form a helical membrane-spanning segment.

Belongs to the peptidase A8 family.

The protein localises to the cell inner membrane. The catalysed reaction is Release of signal peptides from bacterial membrane prolipoproteins. Hydrolyzes -Xaa-Yaa-Zaa-|-(S,diacylglyceryl)Cys-, in which Xaa is hydrophobic (preferably Leu), and Yaa (Ala or Ser) and Zaa (Gly or Ala) have small, neutral side chains.. It functions in the pathway protein modification; lipoprotein biosynthesis (signal peptide cleavage). This protein specifically catalyzes the removal of signal peptides from prolipoproteins. In Haemophilus influenzae (strain PittGG), this protein is Lipoprotein signal peptidase.